The chain runs to 484 residues: Probable sphingolipid transporter spinster homolog 2 (484 aa).

The tract at residues 1 to 23 (MDVDGEGDRGQNPRIMERDSDSI) is disordered. The helical transmembrane segment at 38 to 58 (LLFVFCVVNLINYIDRGAIAS) threads the bilayer. N-linked (GlcNAc...) asparagine glycosylation is found at Asn-62 and Asn-85. The next 11 membrane-spanning stretches (helical) occupy residues 93-113 (VLSSAFMVGLLVASPIFASLA), 122-142 (IGVGLSIWTLAVIGCGLSFDF), 147-167 (ICRMFVGVGEASFVSLAAPFI), 181-201 (AVFYMCIPTGYAFGYVYGGVV), 209-229 (AAFWGEAILMLPFAVLGFVIK), 273-293 (VYVTNILGYIAYNFVLGAYSY), 311-331 (IFGGVTVVCGIVGTLSGGVIL), 345-362 (LSVSTFIGAIFCFAAFCF), 377-397 (LLVFATQGPVNFIVLHCVKPS), 405-425 (MSTVSIHIFGDVPSSPLVGVL), and 436-456 (SLVLTFVLFPAAAIWSIGIFL). The residue at position 466 (Ser-466) is a Phosphoserine.

This sequence belongs to the major facilitator superfamily. Spinster (TC 2.A.1.49) family.

It is found in the late endosome membrane. It localises to the lysosome membrane. Its function is as follows. Probable sphingolipid transporter that plays a central role in endosomes and/or lysosomes storage. This chain is Probable sphingolipid transporter spinster homolog 2, found in Arabidopsis thaliana (Mouse-ear cress).